We begin with the raw amino-acid sequence, 665 residues long: Envelope glycoprotein (665 aa).

An N-terminal signal peptide occupies residues 1–33 (MARSTLSKPLKNKVNPRGPLIPLILLMLRGVST). Residues 34-267 (ASPGSSPHQV…RYQNLGPRVP (234 aa)) form a receptor-binding domain (RBD) region. The Extracellular portion of the chain corresponds to 34-610 (ASPGSSPHQV…FNRSPWFTTL (577 aa)). N-linked (GlcNAc...) asparagine; by host glycosylation occurs at Asn-45. Disulfide bonds link Cys-79/Cys-129, Cys-105/Cys-118, Cys-106/Cys-114, Cys-152/Cys-172, and Cys-164/Cys-177. Asp-117 contributes to the Zn(2+) binding site. A glycan (N-linked (GlcNAc...) asparagine; by host) is linked at Asn-199. Cys-209 and Cys-215 are joined by a disulfide. Residues 268 to 309 (IGPNPVLADQQPLSKPKPVKSPSVTKPPSGTPLSPTQLPPAG) form a disordered region. Residues 281–299 (SKPKPVKSPSVTKPPSGTP) show a composition bias toward low complexity. A glycan (N-linked (GlcNAc...) asparagine; by host) is linked at Asn-326. Disulfide bonds link Cys-336–Cys-339, Cys-336–Cys-563, Cys-366–Cys-420, Cys-385–Cys-397, Cys-427–Cys-440, and Cys-555–Cys-562. A CXXC motif is present at residues 336–339 (CWLC). Asn-358 and Asn-365 each carry an N-linked (GlcNAc...) asparagine; by host glycan. Residues Asn-398 and Asn-434 are each glycosylated (N-linked (GlcNAc...) asparagine; by host). The interval 472–492 (VSLTLALLLGGLTMGGIAAGI) is fusion peptide. Residues 500–537 (MATQQFQQLQAAVQDDLREVEKSISNLEKSLTSLSEVV) are a coiled coil. An immunosuppression region spans residues 538–554 (LQNRRGLDLLFLKEGGL). Positions 555–563 (CAALKEECC) match the CX6CC motif. The chain crosses the membrane as a helical span at residues 611–631 (ISTIMGPLIVLLMILLFGPCI). Cys-630 carries the S-palmitoyl cysteine; by host lipid modification. Over 632 to 665 (LNRLVQFVKDRISVVQALVLTQQYHQLKPIEYEP) the chain is Cytoplasmic. The YXXL motif; contains endocytosis signal signature appears at 655–658 (YHQL).

The mature envelope protein (Env) consists of a trimer of SU-TM heterodimers attached by a labile interchain disulfide bond. The activated Env consists of SU monomers and TM trimers. Specific enzymatic cleavages in vivo yield mature proteins. Envelope glycoproteins are synthesized as an inactive precursor that is N-glycosylated and processed likely by host cell furin or by a furin-like protease in the Golgi to yield the mature SU and TM proteins. The cleavage site between SU and TM requires the minimal sequence [KR]-X-[KR]-R. The R-peptide is released from the C-terminus of the cytoplasmic tail of the TM protein upon particle formation as a result of proteolytic cleavage by the viral protease. Cleavage of this peptide is required for TM to become fusogenic. In terms of processing, the CXXC motif is highly conserved across a broad range of retroviral envelope proteins. It is thought to participate in the formation of a labile disulfide bond possibly with the CX6CC motif present in the transmembrane protein. Isomerization of the intersubunit disulfide bond to an SU intrachain disulfide bond is thought to occur upon receptor recognition in order to allow membrane fusion. Post-translationally, the transmembrane protein is palmitoylated. The R-peptide is palmitoylated.

The protein localises to the virion membrane. It localises to the host cell membrane. In terms of biological role, the surface protein (SU) attaches the virus to the host cell by binding to its receptor. Interaction with HECT ubiquitin ligases activates a thiol in a CXXC motif of the C-terminal domain, where the other Cys residue participates in the formation of the intersubunit disulfide. The activated thiol will attack the disulfide and cause its isomerization into a disulfide isomer within the motif. This leads to SU displacement and TM refolding, and is thought to activate its fusogenic potential by unmasking its fusion peptide. Fusion occurs at the host cell plasma membrane. Its function is as follows. The transmembrane protein (TM) acts as a class I viral fusion protein. Under the current model, the protein has at least 3 conformational states: pre-fusion native state, pre-hairpin intermediate state, and post-fusion hairpin state. During viral and target cell membrane fusion, the coiled coil regions (heptad repeats) assume a trimer-of-hairpins structure, positioning the fusion peptide in close proximity to the C-terminal region of the ectodomain. The formation of this structure appears to drive apposition and subsequent fusion of viral and target cell membranes. Membranes fusion leads to delivery of the nucleocapsid into the cytoplasm. In Mus musculus (Mouse), this protein is Envelope glycoprotein (env).